The sequence spans 295 residues: Replication-associated protein A (295 aa).

The tract at residues 1 to 31 (MSSLPVSESEGEGSGTSVQVPSRGGQVTPGE) is disordered. In terms of domain architecture, CRESS-DNA virus Rep endonuclease spans 35–138 (SLRTKHVFLT…PESSWEFGKF (104 aa)). Residues 42–45 (FLTY) carry the RCR-1 motif. Positions 76, 84, and 86 each coordinate a divalent metal cation. Positions 84–86 (HLH) match the RCR-2 motif. Y124 acts as the For DNA cleavage activity in catalysis. Residues 124 to 127 (YCMK) carry the RCR-3 motif. An oligomerization region spans residues 192–204 (SANALFPDPPQTY).

The protein belongs to the geminiviridae Rep protein family. As to quaternary structure, homooligomer. Part of the C- and V-complexes which are RepA-Rep-DNA complexes involved in the c-sense and v-sense transcription.

The protein localises to the host nucleus. Its subcellular location is the host cytoplasm. Functionally, implicated in enhancement of V-sense gene expression. Acts a an inhibitor of C-sense gene transcription. The sequence is that of Replication-associated protein A from Avena sativa (Oat).